A 156-amino-acid polypeptide reads, in one-letter code: 3-hydroxyacyl-[acyl-carrier-protein] dehydratase FabZ (156 aa).

The active site involves His-50.

Belongs to the thioester dehydratase family. FabZ subfamily.

The protein localises to the cytoplasm. The enzyme catalyses a (3R)-hydroxyacyl-[ACP] = a (2E)-enoyl-[ACP] + H2O. Involved in unsaturated fatty acids biosynthesis. Catalyzes the dehydration of short chain beta-hydroxyacyl-ACPs and long chain saturated and unsaturated beta-hydroxyacyl-ACPs. This chain is 3-hydroxyacyl-[acyl-carrier-protein] dehydratase FabZ, found in Janthinobacterium sp. (strain Marseille) (Minibacterium massiliensis).